Reading from the N-terminus, the 325-residue chain is MITAAAVPWQHRTVLLHEAVDALVQRPAGVYLDGTYGRGGHSRLILERLDPAGRLIAIDRDPEALANARSGETRIDDPRFSIHHARFAEFESVLDEAGVGQLDGLLLDLGISSPQIDNPERGFSFRFDGPLDMRMDPTRGQSAAEFLASAPFERIKEVVRDYGEERFADAVAKAIVARREEGRPVQRTAELAALVAGAVKTRERGQDPATRTFQALRILVNAELEEVEQGLNRALARLAPGGRLAVIAFHSLEDRIVKTFIARHAREVYDRRMPYATPAPLLMRAVARIKPGEAEVAANPRARSAILRVAERTDVPLPVVVGRYA.

Residues 39-41, Asp59, Phe90, Asp108, and Gln115 contribute to the S-adenosyl-L-methionine site; that span reads GGH.

The protein belongs to the methyltransferase superfamily. RsmH family.

The protein localises to the cytoplasm. The catalysed reaction is cytidine(1402) in 16S rRNA + S-adenosyl-L-methionine = N(4)-methylcytidine(1402) in 16S rRNA + S-adenosyl-L-homocysteine + H(+). Functionally, specifically methylates the N4 position of cytidine in position 1402 (C1402) of 16S rRNA. The polypeptide is Ribosomal RNA small subunit methyltransferase H (Leptothrix cholodnii (strain ATCC 51168 / LMG 8142 / SP-6) (Leptothrix discophora (strain SP-6))).